The sequence spans 1361 residues: Cell migration-inducing and hyaluronan-binding protein (1361 aa).

A signal peptide spans 1–30 (MRASGRHDVSLKIVLATGCLLLANFSGASS). In terms of domain architecture, G8 spans 44 to 166 (QPWSPGHNRD…KKLSWTFLNK (123 aa)). N-linked (GlcNAc...) asparagine glycosylation is found at N119, N165, N312, and N420. Residues 176–317 (GGYFFERSWG…GEHFNVSSSS (142 aa)) enclose the GG-type lectin 1 domain. Residues 295-591 (AAARVFKLFQ…IHHTFSRCIT (297 aa)) form a necessary for its endoplasmic reticulum (ER) retention and interaction with HSPA5 region. PbH1 repeat units follow at residues 572 to 594 (DPPT…TVHG), 595 to 617 (SNGL…FTED), 719 to 741 (IPLG…IIDN), and 798 to 819 (GGDV…TLAS). N-linked (GlcNAc...) asparagine glycosylation is found at N889 and N921. In terms of domain architecture, GG-type lectin 2 spans 1227 to 1361 (NDFAYIEVDG…PIPVVRKKKL (135 aa)).

It belongs to the CEMIP family. As to quaternary structure, interacts with EPHA2 and ITPR3. Interacts with HSPA5/BIP; the interaction induces calcium leakage from the endoplasmic reticulum and cell migration. Interacts with clathrin heavy chain/CLTC. N-glycosylated; glycosylation is not necessary for HA-binding. Expressed in Deiters' cells and various supporting cells in the organ of Corti including inner phalangeal, border, inner and outer pillar cells (at protein level). Weakly expressed in brain and testis. In ear, it is specifically expressed in inner ear. Expressed in Deiters' cells in the organ of Corti at P0 (postnatal day zero) before the onset of hearing, but disappears by day P7. Also expressed in fibrocytes of the spiral ligament and the spiral limbus through to P21, when the cochlea matures.

Its subcellular location is the nucleus. It is found in the cytoplasm. The protein resides in the endoplasmic reticulum. It localises to the cell membrane. The protein localises to the membrane. Its subcellular location is the clathrin-coated pit. It is found in the secreted. The catalysed reaction is Random hydrolysis of (1-&gt;4)-linkages between N-acetyl-beta-D-glucosamine and D-glucuronate residues in hyaluronate.. Activity is up-regulated by histamine. Its function is as follows. Mediates depolymerization of hyaluronic acid (HA) via the cell membrane-associated clathrin-coated pit endocytic pathway. Binds to hyaluronic acid. Hydrolyzes high molecular weight hyaluronic acid to produce an intermediate-sized product, a process that may occur through rapid vesicle endocytosis and recycling without intracytoplasmic accumulation or digestion in lysosomes. Involved in hyaluronan catabolism in the dermis of the skin and arthritic synovium. Positively regulates epithelial-mesenchymal transition (EMT), and hence tumor cell growth, invasion and cancer dissemination. In collaboration with HSPA5/BIP, promotes cancer cell migration in a calcium and PKC-dependent manner. May be involved in hearing. The sequence is that of Cell migration-inducing and hyaluronan-binding protein (Cemip) from Mus musculus (Mouse).